A 316-amino-acid polypeptide reads, in one-letter code: MNQLDALKQYTTVVADTGDFKQLAQFQPQDATTNPSLILKAVQKPEYAPLLKDCVTRWHGRAIDELMDRLIVRFGCEILSIIPGRVSTEVDARLSFDTAATVARAERIVELYQAEGLHIDRVLIKIAATWEGIQAARQLEQRGIHTNLTLLFSFAQAVACGQAKVQLISPFVGRIYDWYKKQAGANWDEAAMAGANDPGVQSVRAIYNHYKHFGIGTEVMGASFRNTGQIVALAGCDLLTIAPELLAQLAASDAPVARVLDPEAARRVALQPVQYDEAGFRYALNADAMATEKLAEGIRAFAADAAKLEQLMQAAA.

Lys125 (schiff-base intermediate with substrate) is an active-site residue.

Belongs to the transaldolase family. Type 1 subfamily. In terms of assembly, homodimer.

The protein localises to the cytoplasm. It catalyses the reaction D-sedoheptulose 7-phosphate + D-glyceraldehyde 3-phosphate = D-erythrose 4-phosphate + beta-D-fructose 6-phosphate. It participates in carbohydrate degradation; pentose phosphate pathway; D-glyceraldehyde 3-phosphate and beta-D-fructose 6-phosphate from D-ribose 5-phosphate and D-xylulose 5-phosphate (non-oxidative stage): step 2/3. Its function is as follows. Transaldolase is important for the balance of metabolites in the pentose-phosphate pathway. This chain is Transaldolase, found in Acidovorax ebreus (strain TPSY) (Diaphorobacter sp. (strain TPSY)).